A 653-amino-acid chain; its full sequence is Translation factor GUF1, mitochondrial (653 aa).

One can recognise a tr-type G domain in the interval 56-236 (ENYRNFSIVA…SIIKNIPAPN (181 aa)). GTP is bound by residues 65–72 (AHVDHGKS), 129–133 (DTPGH), and 183–186 (NKID).

Belongs to the TRAFAC class translation factor GTPase superfamily. Classic translation factor GTPase family. LepA subfamily.

It is found in the mitochondrion inner membrane. The catalysed reaction is GTP + H2O = GDP + phosphate + H(+). Promotes mitochondrial protein synthesis. May act as a fidelity factor of the translation reaction, by catalyzing a one-codon backward translocation of tRNAs on improperly translocated ribosomes. Binds to mitochondrial ribosomes in a GTP-dependent manner. The sequence is that of Translation factor GUF1, mitochondrial from Candida tropicalis (strain ATCC MYA-3404 / T1) (Yeast).